The chain runs to 149 residues: Calmodulin (149 aa).

Ala-2 carries the N-acetylalanine modification. EF-hand domains lie at 8–43 (EQIAEFKEAFSLFDKDGDGTITTKELGTVMRSLGQN), 44–79 (PTEAELQDMINEVDADGNGTIDFPEFLTMMAKKMKD), 81–116 (DSEEEIREAFRVFDKDGNGYISAAELRHVMTNLGEK), and 117–149 (LTDEEVDEMIREADIDGDGQVNYEEFVQMMTAK). 15 residues coordinate Ca(2+): Asp-21, Asp-23, Asp-25, Thr-27, Glu-32, Asp-57, Asp-59, Asn-61, Thr-63, Glu-68, Asp-94, Asp-96, Asn-98, Tyr-100, and Glu-105. Lys-116 carries the post-translational modification N6,N6,N6-trimethyllysine. 5 residues coordinate Ca(2+): Asp-130, Asp-132, Asp-134, Gln-136, and Glu-141.

Belongs to the calmodulin family.

Its function is as follows. Calmodulin acts as part of a calcium signal transduction pathway by mediating the control of a large number of enzymes, ion channels, aquaporins and other proteins through calcium-binding. Calcium-binding is required for the activation of calmodulin. Among the enzymes to be stimulated by the calmodulin-calcium complex are a number of protein kinases, such as myosin light-chain kinases and calmodulin-dependent protein kinase type II (CaMK2), and phosphatases. The chain is Calmodulin (calm) from Electrophorus electricus (Electric eel).